Here is a 66-residue protein sequence, read N- to C-terminus: Clusterin (66 aa).

The protein belongs to the clusterin family. In terms of assembly, antiparallel disulfide-linked heterodimer of an alpha chain and a beta chain. Self-associates and forms higher oligomers. Interacts with a broad range of misfolded proteins, including APP, APOC2 and LYZ. Slightly acidic pH promotes interaction with misfolded proteins. Forms high-molecular weight oligomers upon interaction with misfolded proteins. Interacts with APOA1, LRP2, CLUAP1 and PON1. Interacts with the complement membrane attack complex. Interacts (via alpha chain) with XRCC6. Interacts with SYVN1, COMMD1, BTRC, CUL1 and with ubiquitin and SCF (SKP1-CUL1-F-box protein) E3 ubiquitin-protein ligase complexes. Interacts (via alpha chain) with BAX in stressed cells, where BAX undergoes a conformation change leading to association with the mitochondrial membrane. Does not interact with BAX in unstressed cells. Found in a complex with LTF, CLU, EPPIN and SEMG1. Interacts (immaturely glycosylated pre-secreted form) with HSPA5; this interaction promotes CLU stability and facilitates stress-induced CLU retrotranslocation from the secretory pathway to the mitochondria, thereby reducing stress-induced apoptosis by stabilizing mitochondrial membrane integrity. Interacts with BCL2L1; this interaction releases and activates BAX and promotes cell death. Interacts with TGFBR2 and ACVR1. Interacts (secreted form) with STMN3; this interaction may act as an important modulator during neuronal differentiation. Component of a epididymal complex at least composed of soluble form of prion protein PRNP, CLU, BPI, CES5A, MANBA and GLB1. Proteolytically cleaved on its way through the secretory system, probably within the Golgi lumen. Proteolytic cleavage is not necessary for its chaperone activity. All non-secreted forms are not proteolytically cleaved. Chaperone activity of uncleaved forms is dependent on a non-reducing environment. Post-translationally, polyubiquitinated, leading to proteasomal degradation. Under cellular stress, the intracellular level of cleaved form is reduced due to proteasomal degradation. In terms of processing, heavily N-glycosylated. About 30% of the protein mass is comprised of complex N-linked carbohydrate. Endoplasmic reticulum (ER) stress induces changes in glycosylation status and increases level of hypoglycosylated forms. Core carbohydrates are essential for chaperone activity. Non-secreted forms are hypoglycosylated or unglycosylated.

It localises to the secreted. The protein resides in the nucleus. The protein localises to the cytoplasm. It is found in the mitochondrion membrane. Its subcellular location is the cytosol. It localises to the microsome. The protein resides in the endoplasmic reticulum. The protein localises to the mitochondrion. It is found in the perinuclear region. Its subcellular location is the cytoplasmic vesicle. It localises to the secretory vesicle. The protein resides in the chromaffin granule. Functionally, functions as extracellular chaperone that prevents aggregation of non native proteins. Prevents stress-induced aggregation of blood plasma proteins. Inhibits formation of amyloid fibrils by APP, APOC2, B2M, CALCA, CSN3, SNCA and aggregation-prone LYZ variants (in vitro). Does not require ATP. Maintains partially unfolded proteins in a state appropriate for subsequent refolding by other chaperones, such as HSPA8/HSC70. Does not refold proteins by itself. Binding to cell surface receptors triggers internalization of the chaperone-client complex and subsequent lysosomal or proteasomal degradation. When secreted, protects cells against apoptosis and against cytolysis by complement: inhibits assembly of the complement membrane attack complex (MAC) by preventing polymerization of C9 pore component of the MAC complex. Intracellular forms interact with ubiquitin and SCF (SKP1-CUL1-F-box protein) E3 ubiquitin-protein ligase complexes and promote the ubiquitination and subsequent proteasomal degradation of target proteins. Promotes proteasomal degradation of COMMD1 and IKBKB. Modulates NF-kappa-B transcriptional activity. Following stress, promotes apoptosis. Inhibits apoptosis when associated with the mitochondrial membrane by interference with BAX-dependent release of cytochrome c into the cytoplasm. Plays a role in the regulation of cell proliferation. An intracellular form suppresses stress-induced apoptosis by stabilizing mitochondrial membrane integrity through interaction with HSPA5. Secreted form does not affect caspase or BAX-mediated intrinsic apoptosis and TNF-induced NF-kappa-B-activity. Secreted form act as an important modulator during neuronal differentiation through interaction with STMN3. Plays a role in the clearance of immune complexes that arise during cell injury. This is Clusterin (CLU) from Ovis aries (Sheep).